The sequence spans 662 residues: ATP-dependent zinc metalloprotease YME1 homolog (662 aa).

206–213 is an ATP binding site; sequence GPPGVGKT. His425 is a binding site for Zn(2+). Glu426 is a catalytic residue. The Zn(2+) site is built by His429 and Asp503.

In the N-terminal section; belongs to the AAA ATPase family. The protein in the C-terminal section; belongs to the peptidase M41 family. It depends on Zn(2+) as a cofactor.

Putative ATP-dependent protease. This chain is ATP-dependent zinc metalloprotease YME1 homolog, found in Schistosoma mansoni (Blood fluke).